A 1028-amino-acid polypeptide reads, in one-letter code: Unconventional myosin-Ic (1028 aa).

N-acetylmethionine is present on Met-1. Residues 12–696 (GVQDFVLLEN…TLFATEDALE (685 aa)) enclose the Myosin motor domain. ATP-binding positions include Asn-53, Tyr-61, 104–113 (SGESGAGKTE), and 157–161 (NDNSS). Position 348 is an N6-methyllysine (Lys-348). Residues 573–595 (LSKLMEILMSKQPSYVRCIKPND) are actin-binding. IQ domains are found at residues 699–728 (KHSI…SAVE) and 722–751 (MKHS…AVDV). The TH1 domain occupies 850-1024 (KDNYPQSVPR…NGHLSVVAPR (175 aa)).

The protein belongs to the TRAFAC class myosin-kinesin ATPase superfamily. Myosin family. Interacts (via its IQ motifs) with calmodulin. Expressed in brain and the sacculus of the internal ear.

Its subcellular location is the cytoplasm. The protein localises to the cell membrane. The protein resides in the cell projection. It is found in the ruffle membrane. It localises to the cytoplasmic vesicle. Its subcellular location is the stereocilium membrane. Functionally, myosins are actin-based motor molecules with ATPase activity. Unconventional myosins serve in intracellular movements. Their highly divergent tails are presumed to bind to membranous compartments, which would be moved relative to actin filaments. This chain is Unconventional myosin-Ic (Myo1c), found in Aquarana catesbeiana (American bullfrog).